The sequence spans 477 residues: Phosphomethylpyrimidine synthase (477 aa).

Substrate is bound by residues N67, M96, Y125, H160, S180–G182, D221–R224, and E260. H264 contacts Zn(2+). Residue Y287 participates in substrate binding. H328 lines the Zn(2+) pocket. 3 residues coordinate [4Fe-4S] cluster: C408, C411, and C416. The span at A427–L440 shows a compositional bias: basic and acidic residues. The tract at residues A427–D477 is disordered.

Belongs to the ThiC family. Requires [4Fe-4S] cluster as cofactor.

The catalysed reaction is 5-amino-1-(5-phospho-beta-D-ribosyl)imidazole + S-adenosyl-L-methionine = 4-amino-2-methyl-5-(phosphooxymethyl)pyrimidine + CO + 5'-deoxyadenosine + formate + L-methionine + 3 H(+). The protein operates within cofactor biosynthesis; thiamine diphosphate biosynthesis. Catalyzes the synthesis of the hydroxymethylpyrimidine phosphate (HMP-P) moiety of thiamine from aminoimidazole ribotide (AIR) in a radical S-adenosyl-L-methionine (SAM)-dependent reaction. In Natronomonas pharaonis (strain ATCC 35678 / DSM 2160 / CIP 103997 / JCM 8858 / NBRC 14720 / NCIMB 2260 / Gabara) (Halobacterium pharaonis), this protein is Phosphomethylpyrimidine synthase.